The following is a 511-amino-acid chain: Histidine ammonia-lyase (511 aa).

Positions 142 to 144 (ASG) form a cross-link, 5-imidazolinone (Ala-Gly). S143 carries the 2,3-didehydroalanine (Ser) modification.

This sequence belongs to the PAL/histidase family. Post-translationally, contains an active site 4-methylidene-imidazol-5-one (MIO), which is formed autocatalytically by cyclization and dehydration of residues Ala-Ser-Gly.

It localises to the cytoplasm. The enzyme catalyses L-histidine = trans-urocanate + NH4(+). Its pathway is amino-acid degradation; L-histidine degradation into L-glutamate; N-formimidoyl-L-glutamate from L-histidine: step 1/3. This is Histidine ammonia-lyase from Brucella abortus (strain S19).